The primary structure comprises 197 residues: MMFPQSRHSGSSHLPQQLKFTTSDSCDRIKDEFQLLQAQYHSLKLECDKLASEKSEMQRHYVMYYEMSYGLNIEMHKQAEIVKRLNGICAQVLPYLSQEHQQQVLGAIERAKQVTAPELNSIIRQQLQAHQLSQLQALALPLTPLPVGLQPPSLPAVSAGTGLLSLSALGSQAHLSKEDKNGHDGDTHQEDDGEKSD.

The tract at residues 166-197 (LSALGSQAHLSKEDKNGHDGDTHQEDDGEKSD) is CCN domain. The segment at 174-197 (HLSKEDKNGHDGDTHQEDDGEKSD) is disordered. A compositionally biased stretch (basic and acidic residues) spans 175–197 (LSKEDKNGHDGDTHQEDDGEKSD). A Phosphoserine modification is found at S196.

This sequence belongs to the WD repeat Groucho/TLE family. As to quaternary structure, homooligomer and heterooligomer with other family members. Binds TCF7. Binds the NF-kappa-B subunit RELA. Interacts with PHF12. Interacts (via Q domain) with SIX3. Interacts with SIX6. Post-translationally, ubiquitinated by XIAP/BIRC4. In terms of tissue distribution, found predominantly in muscle, heart and Placenta. In fetal tissues, abundantly expressed in the heart, lung, kidney, brain and liver.

It localises to the nucleus. In terms of biological role, transcriptional corepressor. Acts as a dominant repressor towards other family members. Inhibits NF-kappa-B-regulated gene expression. May be required for the initiation and maintenance of the differentiated state. Essential for the transcriptional repressor activity of SIX3 during retina and lens development. The protein is TLE family member 5 of Homo sapiens (Human).